The sequence spans 83 residues: Small ribosomal subunit protein bS18 (83 aa).

Belongs to the bacterial ribosomal protein bS18 family. As to quaternary structure, part of the 30S ribosomal subunit. Forms a tight heterodimer with protein bS6.

In terms of biological role, binds as a heterodimer with protein bS6 to the central domain of the 16S rRNA, where it helps stabilize the platform of the 30S subunit. The sequence is that of Small ribosomal subunit protein bS18 from Tropheryma whipplei (strain TW08/27) (Whipple's bacillus).